Here is a 368-residue protein sequence, read N- to C-terminus: Chorismate synthase (368 aa).

The NADP(+) site is built by arginine 48 and arginine 54. FMN contacts are provided by residues 131–133, 243–244, glycine 292, 307–311, and arginine 333; these read RSS, NA, and KPTSS.

This sequence belongs to the chorismate synthase family. As to quaternary structure, homotetramer. It depends on FMNH2 as a cofactor.

It carries out the reaction 5-O-(1-carboxyvinyl)-3-phosphoshikimate = chorismate + phosphate. The protein operates within metabolic intermediate biosynthesis; chorismate biosynthesis; chorismate from D-erythrose 4-phosphate and phosphoenolpyruvate: step 7/7. Its function is as follows. Catalyzes the anti-1,4-elimination of the C-3 phosphate and the C-6 proR hydrogen from 5-enolpyruvylshikimate-3-phosphate (EPSP) to yield chorismate, which is the branch point compound that serves as the starting substrate for the three terminal pathways of aromatic amino acid biosynthesis. This reaction introduces a second double bond into the aromatic ring system. This Nitrobacter winogradskyi (strain ATCC 25391 / DSM 10237 / CIP 104748 / NCIMB 11846 / Nb-255) protein is Chorismate synthase.